A 235-amino-acid polypeptide reads, in one-letter code: Large ribosomal subunit protein uL1 (235 aa).

It belongs to the universal ribosomal protein uL1 family. Part of the 50S ribosomal subunit.

Its function is as follows. Binds directly to 23S rRNA. The L1 stalk is quite mobile in the ribosome, and is involved in E site tRNA release. In terms of biological role, protein L1 is also a translational repressor protein, it controls the translation of the L11 operon by binding to its mRNA. This Synechococcus sp. (strain CC9902) protein is Large ribosomal subunit protein uL1.